The following is a 99-amino-acid chain: MISINEVQSIANYCKLRFNEQELNHMVKQLSSIVEMMNKLEKIDCTSVPPMRHFEENNRMRKDQVEQNITVDQLLSNVPQSSATIAKNTKYFVVPKIIE.

It belongs to the GatC family. In terms of assembly, heterotrimer of A, B and C subunits.

The catalysed reaction is L-glutamyl-tRNA(Gln) + L-glutamine + ATP + H2O = L-glutaminyl-tRNA(Gln) + L-glutamate + ADP + phosphate + H(+). It catalyses the reaction L-aspartyl-tRNA(Asn) + L-glutamine + ATP + H2O = L-asparaginyl-tRNA(Asn) + L-glutamate + ADP + phosphate + 2 H(+). Allows the formation of correctly charged Asn-tRNA(Asn) or Gln-tRNA(Gln) through the transamidation of misacylated Asp-tRNA(Asn) or Glu-tRNA(Gln) in organisms which lack either or both of asparaginyl-tRNA or glutaminyl-tRNA synthetases. The reaction takes place in the presence of glutamine and ATP through an activated phospho-Asp-tRNA(Asn) or phospho-Glu-tRNA(Gln). This chain is Aspartyl/glutamyl-tRNA(Asn/Gln) amidotransferase subunit C, found in Orientia tsutsugamushi (strain Ikeda) (Rickettsia tsutsugamushi).